Consider the following 122-residue polypeptide: Protein FAM223B (122 aa).

Belongs to the FAM223 family.

The protein is Protein FAM223B (FAM223B) of Homo sapiens (Human).